The sequence spans 134 residues: Fluoride-specific ion channel FluC 2 (134 aa).

4 helical membrane passes run 10–30 (LSAE…GALL), 43–63 (LLVN…PAAP), 67–87 (LLVG…MVDA), and 100–120 (FGLI…GFWL). Na(+) contacts are provided by Gly75 and Thr78.

The protein belongs to the fluoride channel Fluc/FEX (TC 1.A.43) family.

Its subcellular location is the cell inner membrane. The catalysed reaction is fluoride(in) = fluoride(out). Its activity is regulated as follows. Na(+) is not transported, but it plays an essential structural role and its presence is essential for fluoride channel function. In terms of biological role, fluoride-specific ion channel. Important for reducing fluoride concentration in the cell, thus reducing its toxicity. The chain is Fluoride-specific ion channel FluC 2 from Synechococcus sp. (strain CC9902).